A 134-amino-acid polypeptide reads, in one-letter code: Large ribosomal subunit protein bL20 (134 aa).

It belongs to the bacterial ribosomal protein bL20 family.

In terms of biological role, binds directly to 23S ribosomal RNA and is necessary for the in vitro assembly process of the 50S ribosomal subunit. It is not involved in the protein synthesizing functions of that subunit. The polypeptide is Large ribosomal subunit protein bL20 (Allorhizobium ampelinum (strain ATCC BAA-846 / DSM 112012 / S4) (Agrobacterium vitis (strain S4))).